A 471-amino-acid polypeptide reads, in one-letter code: Ribulose bisphosphate carboxylase large chain (471 aa).

Lys5 carries the N6,N6,N6-trimethyllysine modification. Substrate contacts are provided by Asn114 and Thr164. The active-site Proton acceptor is Lys166. Residue Lys168 participates in substrate binding. Mg(2+) is bound by residues Lys192, Asp194, and Glu195. Position 192 is an N6-carboxylysine (Lys192). Catalysis depends on His285, which acts as the Proton acceptor. 3 residues coordinate substrate: Arg286, His318, and Ser370.

Belongs to the RuBisCO large chain family. Type I subfamily. In terms of assembly, heterohexadecamer of 8 large chains and 8 small chains; disulfide-linked. The disulfide link is formed within the large subunit homodimers. Mg(2+) serves as cofactor. In terms of processing, the disulfide bond which can form in the large chain dimeric partners within the hexadecamer appears to be associated with oxidative stress and protein turnover.

Its subcellular location is the plastid. It is found in the chloroplast. The catalysed reaction is 2 (2R)-3-phosphoglycerate + 2 H(+) = D-ribulose 1,5-bisphosphate + CO2 + H2O. It catalyses the reaction D-ribulose 1,5-bisphosphate + O2 = 2-phosphoglycolate + (2R)-3-phosphoglycerate + 2 H(+). RuBisCO catalyzes two reactions: the carboxylation of D-ribulose 1,5-bisphosphate, the primary event in carbon dioxide fixation, as well as the oxidative fragmentation of the pentose substrate in the photorespiration process. Both reactions occur simultaneously and in competition at the same active site. The chain is Ribulose bisphosphate carboxylase large chain from Strychnos nux-vomica (Poison nut).